We begin with the raw amino-acid sequence, 474 residues long: Iroquois-class homeodomain protein IRX-2 (474 aa).

Positions 115-177 form a DNA-binding region, homeobox; TALE-type; that stretch reads DPAYRKNATR…NARRRLKKEN (63 aa). Disordered stretches follow at residues 177–220, 262–373, and 420–461; these read NKMT…EDEG, EDLE…PGGS, and PGET…DTSE. Ser-187 bears the Phosphoserine mark. Basic and acidic residues predominate over residues 196–210; the sequence is DASRSKEESSDKAQD. The span at 262–275 shows a compositional bias: acidic residues; it reads EDLEDEEDEEDECE. Composition is skewed to low complexity over residues 293–305 and 358–373; these read EAPLLSPAPEAAP and PAAAAPASTGAPPGGS.

Belongs to the TALE/IRO homeobox family. Expressed in specific and overlapping patterns with Irx1 and Irx3 in the developing and adult metanephric kidney. In the adult metanephros, renal expression is found in the loop of Henle in the S3 proximal tubule segment and in the thick ascending limb (TAL) of the distal tubule.

The protein resides in the nucleus. This chain is Iroquois-class homeodomain protein IRX-2 (Irx2), found in Mus musculus (Mouse).